Reading from the N-terminus, the 224-residue chain is LexA repressor (224 aa).

Residues 31-51 (RAEIATELGFRSANAAEEHLQ) constitute a DNA-binding region (H-T-H motif). Active-site for autocatalytic cleavage activity residues include serine 142 and lysine 179.

Belongs to the peptidase S24 family. As to quaternary structure, homodimer.

The catalysed reaction is Hydrolysis of Ala-|-Gly bond in repressor LexA.. Functionally, represses a number of genes involved in the response to DNA damage (SOS response), including recA and lexA. In the presence of single-stranded DNA, RecA interacts with LexA causing an autocatalytic cleavage which disrupts the DNA-binding part of LexA, leading to derepression of the SOS regulon and eventually DNA repair. This is LexA repressor from Albidiferax ferrireducens (strain ATCC BAA-621 / DSM 15236 / T118) (Rhodoferax ferrireducens).